The sequence spans 596 residues: Proline--tRNA ligase (596 aa).

It belongs to the class-II aminoacyl-tRNA synthetase family. ProS type 1 subfamily. As to quaternary structure, homodimer.

Its subcellular location is the cytoplasm. It catalyses the reaction tRNA(Pro) + L-proline + ATP = L-prolyl-tRNA(Pro) + AMP + diphosphate. Functionally, catalyzes the attachment of proline to tRNA(Pro) in a two-step reaction: proline is first activated by ATP to form Pro-AMP and then transferred to the acceptor end of tRNA(Pro). As ProRS can inadvertently accommodate and process non-cognate amino acids such as alanine and cysteine, to avoid such errors it has two additional distinct editing activities against alanine. One activity is designated as 'pretransfer' editing and involves the tRNA(Pro)-independent hydrolysis of activated Ala-AMP. The other activity is designated 'posttransfer' editing and involves deacylation of mischarged Ala-tRNA(Pro). The misacylated Cys-tRNA(Pro) is not edited by ProRS. The polypeptide is Proline--tRNA ligase (Prochlorococcus marinus (strain NATL1A)).